The primary structure comprises 101 residues: Chaperone modulatory protein CbpM (101 aa).

It belongs to the CbpM family.

In terms of biological role, interacts with CbpA and inhibits both the DnaJ-like co-chaperone activity and the DNA binding activity of CbpA. Together with CbpA, modulates the activity of the DnaK chaperone system. Does not inhibit the co-chaperone activity of DnaJ. In Pseudomonas putida (strain GB-1), this protein is Chaperone modulatory protein CbpM.